A 742-amino-acid chain; its full sequence is Zinc finger MYND domain-containing protein 15 (742 aa).

Residues 109–199 are disordered; that stretch reads LEDGEEGEEE…QKRKGQRSEA (91 aa). A compositionally biased stretch (acidic residues) spans 110 to 127; it reads EDGEEGEEEEEEDEEEEK. Residues 151–161 show a composition bias toward polar residues; the sequence is SRESPQETNPP. Basic and acidic residues predominate over residues 166–189; that stretch reads EAAREAGGGKDGCREDRVENETRP. Residues C313, C316, C328, C331, C337, C341, H355, and C359 each contribute to the Zn(2+) site. An MYND-type zinc finger spans residues 313–359; it reads CHVCHRHSFEAKLTPCPQCSAVLYCGEACLRADWQRCPDDVSHRFWC. 2 disordered regions span residues 565–590 and 701–742; these read EVSV…GRRD and QGSG…RRRK. The segment covering 708 to 724 has biased composition (pro residues); it reads APGPPPPSPTPSAPPAP. Residues 725 to 742 show a composition bias toward basic residues; that stretch reads TRRRRGEKKPGRGARRRK.

In terms of assembly, interacts with HDAC1, HDAC3, HDAC6 and, to a lesser extent, with HDAC7.

Its subcellular location is the nucleus. The protein localises to the cytoplasm. Acts as a transcriptional repressor through interaction with histone deacetylases (HDACs). May be important for spermiogenesis. The sequence is that of Zinc finger MYND domain-containing protein 15 (ZMYND15) from Homo sapiens (Human).